Reading from the N-terminus, the 503-residue chain is Putative aldehyde dehydrogenase-like protein C9E9.09c (503 aa).

247–252 is a binding site for NAD(+); the sequence is GSTGVG. Serine 248 is modified (phosphoserine). The Proton acceptor role is filled by glutamate 270. Cysteine 304 serves as the catalytic Nucleophile. Serine 501 is subject to Phosphoserine.

The protein belongs to the aldehyde dehydrogenase family.

The protein is Putative aldehyde dehydrogenase-like protein C9E9.09c of Schizosaccharomyces pombe (strain 972 / ATCC 24843) (Fission yeast).